Consider the following 724-residue polypeptide: Propionyl-CoA carboxylase alpha chain, mitochondrial (724 aa).

Residues 1 to 48 (MAGQWVRTVALLAARRHWRRSSQQQLLGTLKHAPVYSYQCLVVSRSLS) constitute a mitochondrion transit peptide. The 448-residue stretch at 58-505 (TFDKILIANR…STKFLSDVYP (448 aa)) folds into the Biotin carboxylation domain. An N6-acetyllysine; alternate modification is found at K61. K61 is subject to N6-succinyllysine; alternate. K115 bears the N6-succinyllysine mark. N6-acetyllysine; alternate is present on K146. Residue K146 is modified to N6-succinyllysine; alternate. K150 is subject to N6-acetyllysine. K173 contacts ATP. Positions 177-374 (KLLAKRAKVN…LVQEMILVAK (198 aa)) constitute an ATP-grasp domain. K184 carries the post-translational modification N6-succinyllysine. K196 carries the N6-acetyllysine; alternate modification. K196 carries the post-translational modification N6-succinyllysine; alternate. ATP contacts are provided by residues 205–266 (AREI…PRHI), E257, and N292. Position 248 is a phosphoserine (S248). An N6-succinyllysine modification is found at K258. K324 is modified (N6-acetyllysine; alternate). Position 324 is an N6-succinyllysine; alternate (K324). The Mg(2+) site is built by E332, E345, and N347. Positions 332, 345, and 347 each coordinate Mn(2+). Residue R349 is part of the active site. An N6-succinyllysine mark is found at K381 and K403. Residue F405 coordinates biotin. K492 carries the N6-acetyllysine modification. 4 positions are modified to N6-succinyllysine: K498, K509, K554, and K644. Residues 645–724 (FMLEKVPKDT…GEGDLLVELE (80 aa)) enclose the Biotinyl-binding domain. An N6-biotinyllysine; by HLCS modification is found at K690.

The holoenzyme is a dodecamer composed of 6 PCCA/alpha subunits and 6 PCCB/beta subunits. Interacts (via the biotin carboxylation domain) with SIRT4. Interacts with SIRT3 and SIRT5. It depends on Mg(2+) as a cofactor. Mn(2+) serves as cofactor. Biotin is required as a cofactor. Acetylated. Post-translationally, the biotin cofactor is covalently attached to the C-terminal biotinyl-binding domain and is required for the catalytic activity. Biotinylation is catalyzed by HLCS.

It localises to the mitochondrion matrix. It carries out the reaction propanoyl-CoA + hydrogencarbonate + ATP = (S)-methylmalonyl-CoA + ADP + phosphate + H(+). The catalysed reaction is butanoyl-CoA + hydrogencarbonate + ATP = (2S)-ethylmalonyl-CoA + ADP + phosphate + H(+). It functions in the pathway metabolic intermediate metabolism; propanoyl-CoA degradation; succinyl-CoA from propanoyl-CoA: step 1/3. This is one of the 2 subunits of the biotin-dependent propionyl-CoA carboxylase (PCC), a mitochondrial enzyme involved in the catabolism of odd chain fatty acids, branched-chain amino acids isoleucine, threonine, methionine, and valine and other metabolites. Propionyl-CoA carboxylase catalyzes the carboxylation of propionyl-CoA/propanoyl-CoA to D-methylmalonyl-CoA/(S)-methylmalonyl-CoA. Within the holoenzyme, the alpha subunit catalyzes the ATP-dependent carboxylation of the biotin carried by the biotin carboxyl carrier (BCC) domain, while the beta subunit then transfers the carboxyl group from carboxylated biotin to propionyl-CoA. Propionyl-CoA carboxylase also significantly acts on butyryl-CoA/butanoyl-CoA, which is converted to ethylmalonyl-CoA/(2S)-ethylmalonyl-CoA. Other alternative minor substrates include (2E)-butenoyl-CoA/crotonoyl-CoA. The polypeptide is Propionyl-CoA carboxylase alpha chain, mitochondrial (Mus musculus (Mouse)).